A 309-amino-acid polypeptide reads, in one-letter code: Foldase protein PrsA 2 (309 aa).

An N-terminal signal peptide occupies residues 1-22 (MKQMNKLITGVVTLATVVTLSA). Residue cysteine 23 is the site of N-palmitoyl cysteine attachment. Residue cysteine 23 is the site of S-diacylglycerol cysteine attachment. Positions 146-241 (TPTMTAEIMQ…RTYHIIKVTK (96 aa)) constitute a PpiC domain.

This sequence belongs to the PrsA family.

The protein localises to the cell membrane. The enzyme catalyses [protein]-peptidylproline (omega=180) = [protein]-peptidylproline (omega=0). In terms of biological role, plays a major role in protein secretion by helping the post-translocational extracellular folding of several secreted proteins. The sequence is that of Foldase protein PrsA 2 (prsA2) from Streptococcus pyogenes serotype M1.